A 791-amino-acid chain; its full sequence is Phenylalanine--tRNA ligase beta subunit (791 aa).

The tRNA-binding domain occupies 39-147; the sequence is GDALGQVVVA…DDAPVGQALA (109 aa). The B5 domain maps to 400–475; that stretch reads PQPASILLRR…RIHGYDRVPT (76 aa). D453, D459, E462, and E463 together coordinate Mg(2+). Residues 697-790 form the FDX-ACB domain; the sequence is SRYPSMRRDL…IEREHRARIR (94 aa).

This sequence belongs to the phenylalanyl-tRNA synthetase beta subunit family. Type 1 subfamily. In terms of assembly, tetramer of two alpha and two beta subunits. Mg(2+) is required as a cofactor.

The protein localises to the cytoplasm. The enzyme catalyses tRNA(Phe) + L-phenylalanine + ATP = L-phenylalanyl-tRNA(Phe) + AMP + diphosphate + H(+). This is Phenylalanine--tRNA ligase beta subunit from Xanthomonas campestris pv. campestris (strain 8004).